The sequence spans 393 residues: Formate-dependent phosphoribosylglycinamide formyltransferase (393 aa).

N(1)-(5-phospho-beta-D-ribosyl)glycinamide is bound by residues 22–23 (EL) and Glu82. ATP contacts are provided by residues Arg114, Lys155, 160-165 (SSGKGQ), 195-198 (EGFV), and Glu203. Positions 119-308 (RLAAEELGLP…EFALHVRAFT (190 aa)) constitute an ATP-grasp domain. Mg(2+) contacts are provided by Glu267 and Glu279. Residues Asp286, Lys356, and 363–364 (RR) each bind N(1)-(5-phospho-beta-D-ribosyl)glycinamide.

It belongs to the PurK/PurT family. In terms of assembly, homodimer.

It catalyses the reaction N(1)-(5-phospho-beta-D-ribosyl)glycinamide + formate + ATP = N(2)-formyl-N(1)-(5-phospho-beta-D-ribosyl)glycinamide + ADP + phosphate + H(+). The protein operates within purine metabolism; IMP biosynthesis via de novo pathway; N(2)-formyl-N(1)-(5-phospho-D-ribosyl)glycinamide from N(1)-(5-phospho-D-ribosyl)glycinamide (formate route): step 1/1. Involved in the de novo purine biosynthesis. Catalyzes the transfer of formate to 5-phospho-ribosyl-glycinamide (GAR), producing 5-phospho-ribosyl-N-formylglycinamide (FGAR). Formate is provided by PurU via hydrolysis of 10-formyl-tetrahydrofolate. The polypeptide is Formate-dependent phosphoribosylglycinamide formyltransferase (Vibrio cholerae serotype O1 (strain M66-2)).